Here is a 511-residue protein sequence, read N- to C-terminus: GMP synthase [glutamine-hydrolyzing] (511 aa).

The Glutamine amidotransferase type-1 domain occupies 6-196 (LVLVLDFGSQ…VFDVCGCTGD (191 aa)). The active-site Nucleophile is the C83. Catalysis depends on residues H170 and E172. The 190-residue stretch at 197-386 (WSIENFIDME…LGVPDRIVWR (190 aa)) folds into the GMPS ATP-PPase domain. 224–230 (SGGVDSS) contributes to the ATP binding site.

In terms of assembly, homodimer.

It carries out the reaction XMP + L-glutamine + ATP + H2O = GMP + L-glutamate + AMP + diphosphate + 2 H(+). It participates in purine metabolism; GMP biosynthesis; GMP from XMP (L-Gln route): step 1/1. Functionally, catalyzes the synthesis of GMP from XMP. This is GMP synthase [glutamine-hydrolyzing] from Oceanobacillus iheyensis (strain DSM 14371 / CIP 107618 / JCM 11309 / KCTC 3954 / HTE831).